Reading from the N-terminus, the 281-residue chain is Cytochrome c oxidase subunit 3 (281 aa).

The Mitochondrial matrix segment spans residues 1–15 (MTHQTHAYHMVNPSP). The helical transmembrane segment at 16-34 (WPLTGALSALLLTSGLIMW) threads the bilayer. The Mitochondrial intermembrane portion of the chain corresponds to 35–40 (FHYNSS). A helical transmembrane segment spans residues 41-66 (TLMFMGLTTMLLTMYQWWRDIIREGT). Topologically, residues 67–72 (FQGHHT) are mitochondrial matrix. Residues 73–105 (PVVQKGLRYGMILFILSEVFFFIGFFWAFYHSS) form a helical membrane-spanning segment. The Mitochondrial intermembrane portion of the chain corresponds to 106–128 (LAPTPELGGCWPPTGIHPLNPLE). The helical transmembrane segment at 129–152 (VPLLNTSILLASGVSITWAHHSLM) threads the bilayer. At 153 to 155 (EGN) the chain is on the mitochondrial matrix side. The chain crosses the membrane as a helical span at residues 156–183 (RKQMIQALLITISLGLYFTILQAMEYYE). Residues 184 to 190 (ASFTISD) are Mitochondrial intermembrane-facing. The helical transmembrane segment at 191–223 (GVYGSTFFVATGFHGLHVIIGSTFLIVCLLRQL) threads the bilayer. At 224–232 (FYHFTSTHH) the chain is on the mitochondrial matrix side. A helical transmembrane segment spans residues 233–256 (FGFEAAAWYWHFVDVVWLFLYVSI). Residues 257–281 (YWWGSYFSSMISTTDFQSLSSGSNQ) are Mitochondrial intermembrane-facing.

This sequence belongs to the cytochrome c oxidase subunit 3 family. Component of the cytochrome c oxidase (complex IV, CIV), a multisubunit enzyme composed of 14 subunits. The complex is composed of a catalytic core of 3 subunits MT-CO1, MT-CO2 and MT-CO3, encoded in the mitochondrial DNA, and 11 supernumerary subunits COX4I, COX5A, COX5B, COX6A, COX6B, COX6C, COX7A, COX7B, COX7C, COX8 and NDUFA4, which are encoded in the nuclear genome. The complex exists as a monomer or a dimer and forms supercomplexes (SCs) in the inner mitochondrial membrane with NADH-ubiquinone oxidoreductase (complex I, CI) and ubiquinol-cytochrome c oxidoreductase (cytochrome b-c1 complex, complex III, CIII), resulting in different assemblies (supercomplex SCI(1)III(2)IV(1) and megacomplex MCI(2)III(2)IV(2)).

Its subcellular location is the mitochondrion inner membrane. It catalyses the reaction 4 Fe(II)-[cytochrome c] + O2 + 8 H(+)(in) = 4 Fe(III)-[cytochrome c] + 2 H2O + 4 H(+)(out). Its function is as follows. Component of the cytochrome c oxidase, the last enzyme in the mitochondrial electron transport chain which drives oxidative phosphorylation. The respiratory chain contains 3 multisubunit complexes succinate dehydrogenase (complex II, CII), ubiquinol-cytochrome c oxidoreductase (cytochrome b-c1 complex, complex III, CIII) and cytochrome c oxidase (complex IV, CIV), that cooperate to transfer electrons derived from NADH and succinate to molecular oxygen, creating an electrochemical gradient over the inner membrane that drives transmembrane transport and the ATP synthase. Cytochrome c oxidase is the component of the respiratory chain that catalyzes the reduction of oxygen to water. Electrons originating from reduced cytochrome c in the intermembrane space (IMS) are transferred via the dinuclear copper A center (CU(A)) of subunit 2 and heme A of subunit 1 to the active site in subunit 1, a binuclear center (BNC) formed by heme A3 and copper B (CU(B)). The BNC reduces molecular oxygen to 2 water molecules using 4 electrons from cytochrome c in the IMS and 4 protons from the mitochondrial matrix. The protein is Cytochrome c oxidase subunit 3 (MT-CO3) of Didelphis virginiana (North American opossum).